Reading from the N-terminus, the 208-residue chain is N-(5'-phosphoribosyl)anthranilate isomerase (208 aa).

It belongs to the TrpF family.

It catalyses the reaction N-(5-phospho-beta-D-ribosyl)anthranilate = 1-(2-carboxyphenylamino)-1-deoxy-D-ribulose 5-phosphate. Its pathway is amino-acid biosynthesis; L-tryptophan biosynthesis; L-tryptophan from chorismate: step 3/5. The polypeptide is N-(5'-phosphoribosyl)anthranilate isomerase (Nitrosospira multiformis (strain ATCC 25196 / NCIMB 11849 / C 71)).